Reading from the N-terminus, the 776-residue chain is Reticulon-1 (776 aa).

4 disordered regions span residues 1-101, 137-168, 205-245, and 285-580; these read MAAP…KDGE, SESP…DSGI, VKHQ…PAPV, and LTEI…APPP. S327 is modified (phosphoserine). A compositionally biased stretch (low complexity) spans 328-341; sequence PGSITPPSSGTEPS. 3 positions are modified to phosphoserine: S350, S352, and S487. Residues 497 to 511 show a composition bias toward basic and acidic residues; that stretch reads AIREETGVRAEERAP. Residues 589–776 form the Reticulon domain; that stretch reads AIDLLYWRDI…KIPGAKRHAE (188 aa). A run of 2 helical transmembrane segments spans residues 603 to 623 and 705 to 725; these read IVFG…VVSV and FAVL…LTLL.

As to quaternary structure, interacts with NDRG1. Interacts with BACE1. In terms of assembly, interacts with TMEM33. Interacts with UGCG; regulates the ceramide glucosyltransferase activity of UGCG. In terms of processing, isoforms RTN1-A and RTN1-B are phosphorylated. As to expression, expressed in neural and neuroendocrine tissues and cell cultures derived therefrom. Expression of isoform RTN1-C is strongly correlated with neuronal differentiation.

The protein resides in the endoplasmic reticulum membrane. Its subcellular location is the golgi apparatus membrane. Inhibits amyloid precursor protein processing, probably by blocking BACE1 activity. The polypeptide is Reticulon-1 (RTN1) (Homo sapiens (Human)).